A 133-amino-acid polypeptide reads, in one-letter code: Transcription antitermination protein NusB (133 aa).

The protein belongs to the NusB family.

In terms of biological role, involved in transcription antitermination. Required for transcription of ribosomal RNA (rRNA) genes. Binds specifically to the boxA antiterminator sequence of the ribosomal RNA (rrn) operons. This is Transcription antitermination protein NusB from Clostridium novyi (strain NT).